The following is a 163-amino-acid chain: NADH-quinone oxidoreductase subunit I (163 aa).

4Fe-4S ferredoxin-type domains follow at residues 55–84 (RRYPSGEERCIACKLCEAICPAQAITIEAE) and 94–123 (TRYDIDMVKCIYCGLCQEACPVDAIVEGPN). [4Fe-4S] cluster is bound by residues Cys64, Cys67, Cys70, Cys74, Cys103, Cys106, Cys109, and Cys113.

This sequence belongs to the complex I 23 kDa subunit family. As to quaternary structure, NDH-1 is composed of 14 different subunits. Subunits NuoA, H, J, K, L, M, N constitute the membrane sector of the complex. [4Fe-4S] cluster serves as cofactor.

Its subcellular location is the cell inner membrane. The enzyme catalyses a quinone + NADH + 5 H(+)(in) = a quinol + NAD(+) + 4 H(+)(out). NDH-1 shuttles electrons from NADH, via FMN and iron-sulfur (Fe-S) centers, to quinones in the respiratory chain. The immediate electron acceptor for the enzyme in this species is believed to be ubiquinone. Couples the redox reaction to proton translocation (for every two electrons transferred, four hydrogen ions are translocated across the cytoplasmic membrane), and thus conserves the redox energy in a proton gradient. This is NADH-quinone oxidoreductase subunit I from Caulobacter vibrioides (strain ATCC 19089 / CIP 103742 / CB 15) (Caulobacter crescentus).